Consider the following 514-residue polypeptide: MTILRNFLTCSALFLALPAAAQVVYLHESDGYNGAINNKSLEPKITCYPEGTSYIFLDDVRISNVKHDQEDAGVFINRSGNLFFMGNRCNFTFHNLMTEGFGAAISNRVGDTTLTLSNFSYLAFTSAPLLPQGQGAIYSLGSVMIENSEEVTFCGNYSSWSGAAIYTPYLLGSKASRPSVNLSGNRYLVFRDNVSQGYGGAISTHNLTLTTRGPSCFENNHAYHDVNSNGGAIAIAPGGSISISVKSGDLIFKGNTASQDGNTIHNSIHLQSGAQFKNLRAVSESGVYFYDPISHSESHKITDLVINAPEGKETYEGTISFSGLCLDDHEVCAENLTSTILQDVTLAGGTLSLSDGVTLQLHSFKQEASSTLTMSPGTTLLCSGDARVQNLHILIEDTDNFVPVRIRAEDKDALVSLEKLKVAFEAYWSVYDFPQFKEAFTIPLLELLGPSFDSLLLGETTLERTQVTTENDAVRGFWSLSWEEYPPSLDKDRRITPTKKTVFLTWNPEITSTP.

The signal sequence occupies residues Met-1 to Ala-21.

The protein belongs to the PMP outer membrane protein family.

It is found in the secreted. Its subcellular location is the cell wall. The protein resides in the cell outer membrane. The protein is Probable outer membrane protein pmp12 (pmp12) of Chlamydia pneumoniae (Chlamydophila pneumoniae).